The chain runs to 147 residues: Calcium-regulated heat-stable protein 1 (147 aa).

Pro residues predominate over residues 1-12 (MSSEPPPPPQPP). Residues 1–52 (MSSEPPPPPQPPTHQASVGLLDTPRSRERSPSPLRGNVVPSPLPTRRTRTFS) are disordered. Ser-2 carries the N-acetylserine modification. Ser-30, Ser-32, and Ser-41 each carry phosphoserine. Thr-45 bears the Phosphothreonine mark. Phosphoserine occurs at positions 52 and 58. One can recognise a CSD domain in the interval 62 to 129 (VYKGVCKCFC…KLQAVEVVIT (68 aa)). Phosphoserine is present on residues Ser-146 and Ser-147.

In terms of assembly, homodimer. Interacts with STYX. Post-translationally, dephosphorylated by calcineurin in a Ca(2+) dependent manner. Can be phosphorylated by DYRK2 (in vitro).

It localises to the cytoplasm. Its subcellular location is the P-body. It is found in the cytoplasmic granule. Binds mRNA and regulates the stability of target mRNA. Binds single-stranded DNA (in vitro). This chain is Calcium-regulated heat-stable protein 1 (CARHSP1), found in Homo sapiens (Human).